The following is a 197-amino-acid chain: Protein GrpE (197 aa).

The tract at residues 1 to 41 is disordered; sequence MSSKEQKTPEGQAPEEIITEQHEEVEAVEPDASAEQVDPRD.

Belongs to the GrpE family. In terms of assembly, homodimer.

The protein resides in the cytoplasm. Functionally, participates actively in the response to hyperosmotic and heat shock by preventing the aggregation of stress-denatured proteins, in association with DnaK and GrpE. It is the nucleotide exchange factor for DnaK and may function as a thermosensor. Unfolded proteins bind initially to DnaJ; upon interaction with the DnaJ-bound protein, DnaK hydrolyzes its bound ATP, resulting in the formation of a stable complex. GrpE releases ADP from DnaK; ATP binding to DnaK triggers the release of the substrate protein, thus completing the reaction cycle. Several rounds of ATP-dependent interactions between DnaJ, DnaK and GrpE are required for fully efficient folding. The chain is Protein GrpE from Enterobacter sp. (strain 638).